The chain runs to 475 residues: 3-keto-steroid reductase ERG27 (475 aa).

4 residues coordinate NADP(+): I32, I55, T59, and K65. Catalysis depends on proton donor residues S249 and Y272. Y272, K276, V324, and S326 together coordinate NADP(+). Catalysis depends on K276, which acts as the Lowers pKa of active site Tyr.

It belongs to the short-chain dehydrogenases/reductases (SDR) family. ERG27 subfamily. As to quaternary structure, heterotetramer of ERG25, ERG26, ERG27 and ERG28. ERG28 acts as a scaffold to tether ERG27 and other 4,4-demethylation-related enzymes, forming a demethylation enzyme complex, in the endoplasmic reticulum.

It localises to the endoplasmic reticulum membrane. The protein localises to the lipid droplet. It participates in steroid metabolism; ergosterol biosynthesis. 3-keto-steroid reductase; part of the third module of ergosterol biosynthesis pathway that includes the late steps of the pathway. ERG27 is a catalytic component of the C-4 demethylation complex that catalyzes the conversion of 4,4-dimethylfecosterol into fecosterol via 4-methylfecosterol. The third module or late pathway involves the ergosterol synthesis itself through consecutive reactions that mainly occur in the endoplasmic reticulum (ER) membrane. Firstly, the squalene synthase ERG9 catalyzes the condensation of 2 farnesyl pyrophosphate moieties to form squalene, which is the precursor of all steroids. Squalene synthase is crucial for balancing the incorporation of farnesyl diphosphate (FPP) into sterol and nonsterol isoprene synthesis. Secondly, squalene is converted into lanosterol by the consecutive action of the squalene epoxidase ERG1 and the lanosterol synthase ERG7. Then, the delta(24)-sterol C-methyltransferase ERG6 methylates lanosterol at C-24 to produce eburicol. Eburicol is the substrate of the sterol 14-alpha demethylase encoded by CYP51A, CYP51B and CYP51C, to yield 4,4,24-trimethyl ergosta-8,14,24(28)-trienol. CYP51B encodes the enzyme primarily responsible for sterol 14-alpha-demethylation, and plays an essential role in ascospore formation. CYP51A encodes an additional sterol 14-alpha-demethylase, induced on ergosterol depletion and responsible for the intrinsic variation in azole sensitivity. The third CYP51 isoform, CYP51C, does not encode a sterol 14-alpha-demethylase, but is required for full virulence on host wheat ears. The C-14 reductase ERG24 then reduces the C14=C15 double bond which leads to 4,4-dimethylfecosterol. A sequence of further demethylations at C-4, involving the C-4 demethylation complex containing the C-4 methylsterol oxidases ERG25, the sterol-4-alpha-carboxylate 3-dehydrogenase ERG26 and the 3-keto-steroid reductase ERG27, leads to the production of fecosterol via 4-methylfecosterol. ERG28 has a role as a scaffold to help anchor ERG25, ERG26 and ERG27 to the endoplasmic reticulum. The C-8 sterol isomerase ERG2 then catalyzes the reaction which results in unsaturation at C-7 in the B ring of sterols and thus converts fecosterol to episterol. The sterol-C5-desaturases ERG3A and ERG3BB then catalyze the introduction of a C-5 double bond in the B ring to produce 5-dehydroepisterol. The C-22 sterol desaturases ERG5A and ERG5B further convert 5-dehydroepisterol into ergosta-5,7,22,24(28)-tetraen-3beta-ol by forming the C-22(23) double bond in the sterol side chain. Finally, ergosta-5,7,22,24(28)-tetraen-3beta-ol is substrate of the C-24(28) sterol reductase ERG4 to produce ergosterol. The polypeptide is 3-keto-steroid reductase ERG27 (Gibberella zeae (strain ATCC MYA-4620 / CBS 123657 / FGSC 9075 / NRRL 31084 / PH-1) (Wheat head blight fungus)).